A 266-amino-acid chain; its full sequence is GTP cyclohydrolase III (266 aa).

The protein belongs to the archaeal-type GTP cyclohydrolase family.

It carries out the reaction GTP + 3 H2O = 2-amino-5-formylamino-6-(5-phospho-D-ribosylamino)pyrimidin-4(3H)-one + 2 phosphate + 2 H(+). Catalyzes the formation of 2-amino-5-formylamino-6-ribofuranosylamino-4(3H)-pyrimidinone ribonucleotide monophosphate and inorganic phosphate from GTP. Also has an independent pyrophosphate phosphohydrolase activity. This Methanococcus maripaludis (strain DSM 14266 / JCM 13030 / NBRC 101832 / S2 / LL) protein is GTP cyclohydrolase III.